Reading from the N-terminus, the 154-residue chain is Cyclin-dependent protein kinase inhibitor SMR14 (154 aa).

A disordered region spans residues 1 to 111 (MSKIKIFHLF…RPPRKPKAIP (111 aa)). Over residues 24–37 (SLLVPSKSDSLDSS) the composition is skewed to low complexity. Basic and acidic residues predominate over residues 74 to 83 (KWECKDEESP).

Functionally, probable cyclin-dependent protein kinase (CDK) inhibitor that functions as a repressor of mitosis in the endoreduplication cell cycle. The chain is Cyclin-dependent protein kinase inhibitor SMR14 from Arabidopsis thaliana (Mouse-ear cress).